The chain runs to 335 residues: Phosphate acyltransferase (335 aa).

Belongs to the PlsX family. As to quaternary structure, homodimer. Probably interacts with PlsY.

The protein localises to the cytoplasm. It carries out the reaction a fatty acyl-[ACP] + phosphate = an acyl phosphate + holo-[ACP]. It participates in lipid metabolism; phospholipid metabolism. Catalyzes the reversible formation of acyl-phosphate (acyl-PO(4)) from acyl-[acyl-carrier-protein] (acyl-ACP). This enzyme utilizes acyl-ACP as fatty acyl donor, but not acyl-CoA. The protein is Phosphate acyltransferase of Clostridium botulinum (strain ATCC 19397 / Type A).